A 269-amino-acid chain; its full sequence is Sulfur carrier protein FdhD (269 aa).

Cysteine 111 serves as the catalytic Cysteine persulfide intermediate.

It belongs to the FdhD family.

Its subcellular location is the cytoplasm. Required for formate dehydrogenase (FDH) activity. Acts as a sulfur carrier protein that transfers sulfur from IscS to the molybdenum cofactor prior to its insertion into FDH. In Brucella abortus biovar 1 (strain 9-941), this protein is Sulfur carrier protein FdhD.